Here is a 747-residue protein sequence, read N- to C-terminus: MLKLFSAFKKDRIWDFDGGIHPPEMKTQSSRTPLRQIPLPEQFIIPLKQHLGPEGEICVSVGDKVLRGQPLTRGRGRTLPVHAPTSGTVNAIRQHTTAHPSGLSELSIIIVPDGEDRWSDRQTLADYQTQSTDTLLAHLHQAGIAGLGGAGFPTAAKLQGGMRGIETLIINGAECEPYITADDRLMQECADEIIQGVEILSFLLQPKRILIGIEDNKPEAISALRLALGKRSDMQLRVIPTKYPSGGAKQLTKILTGKEVPFGKHSAAIGVLMQNVGTAFAIKRAVIDGEPLTERVVTLTGEALRQPGNVWARLGTPVRHLLKQGGFHVNKQPMVVMGGPLMGFTLPSLDVPIVKISNCLLAPSHTEMEPVAEEQSCIRCSQCADACPAGLLPQQLYWFSRGQEHEKARNHHLFDCIECGACAYVCPSNIPLVQYYRQEKAEIRAIDEDAQRAAQAKVRFDAKQARLEREKAARELRHKQAATGVSTSDKDAVQAALERVRRKQSTTTEIGAPIAVMPDAQPDNSAAIAARAARKALVREERARENQTQQETPTVDVPSTELDDPRKAAVAAALARVKARKAAQQTATNAEAPVSSVTSDVVAEPVAVVETQEPDDPRKAAVAAAIARVKARKAAQQTATNAEAPVSSVTSDVVAEPVAVVETQEPDDPRKAAVAAAIARVKARKAAQQTATNAEAPVSSVASDIVAEPVAVVETQEPEDPRKAAVAAAIARVKARKAAQASSHQEE.

4Fe-4S ferredoxin-type domains lie at 368 to 397 (MEPV…QQLY) and 407 to 436 (KARN…VQYY). Residues Cys377, Cys380, Cys383, Cys387, Cys416, Cys419, Cys422, and Cys426 each contribute to the [4Fe-4S] cluster site. The segment at 538–564 (VREERARENQTQQETPTVDVPSTELDD) is disordered.

This sequence belongs to the 4Fe4S bacterial-type ferredoxin family. RnfC subfamily. In terms of assembly, the complex is composed of six subunits: RnfA, RnfB, RnfC, RnfD, RnfE and RnfG. [4Fe-4S] cluster is required as a cofactor.

The protein resides in the cell inner membrane. Part of a membrane-bound complex that couples electron transfer with translocation of ions across the membrane. This is Ion-translocating oxidoreductase complex subunit C from Pectobacterium carotovorum subsp. carotovorum (strain PC1).